The following is a 157-amino-acid chain: Phosphopantetheine adenylyltransferase (157 aa).

It belongs to the eukaryotic CoaD family. Monomer.

Its subcellular location is the cytoplasm. It catalyses the reaction (R)-4'-phosphopantetheine + ATP + H(+) = 3'-dephospho-CoA + diphosphate. Its pathway is cofactor biosynthesis; coenzyme A biosynthesis. Reversibly transfers an adenylyl group from ATP to 4'-phosphopantetheine, yielding dephospho-CoA (dPCoA) and pyrophosphate. The protein is Phosphopantetheine adenylyltransferase of Pyrococcus abyssi (strain GE5 / Orsay).